Consider the following 1577-residue polypeptide: Pentafunctional AROM polypeptide (1577 aa).

Residues 1 to 392 (MASVGLEKVN…YGTSAHVVSD (392 aa)) form a 3-dehydroquinate synthase region. Residues 80-83 (ETYK), 111-113 (GGV), and aspartate 116 contribute to the NAD(+) site. Arginine 127 is a 7-phospho-2-dehydro-3-deoxy-D-arabino-heptonate binding site. 136-137 (TS) lines the NAD(+) pocket. Aspartate 143 and lysine 149 together coordinate 7-phospho-2-dehydro-3-deoxy-D-arabino-heptonate. Lysine 158 provides a ligand contact to NAD(+). Asparagine 159 contacts 7-phospho-2-dehydro-3-deoxy-D-arabino-heptonate. NAD(+)-binding positions include 176–179 (WLET) and asparagine 187. Glutamate 191 lines the Zn(2+) pocket. 7-phospho-2-dehydro-3-deoxy-D-arabino-heptonate-binding positions include 191 to 194 (EVIK) and lysine 258. Residue glutamate 268 is the Proton acceptor; for 3-dehydroquinate synthase activity of the active site. 7-phospho-2-dehydro-3-deoxy-D-arabino-heptonate-binding positions include 272-276 (RNLLN) and histidine 279. Histidine 279 is a Zn(2+) binding site. Histidine 283 serves as the catalytic Proton acceptor; for 3-dehydroquinate synthase activity. 7-phospho-2-dehydro-3-deoxy-D-arabino-heptonate is bound by residues histidine 295 and lysine 364. Histidine 295 is a binding site for Zn(2+). The tract at residues 405–863 (VYPFTDVRSS…WDVLHSRLGA (459 aa)) is EPSP synthase. Residue cysteine 845 is the For EPSP synthase activity of the active site. The segment at 882 to 1071 (VVLIGMRAAG…VPVKRSTFVC (190 aa)) is shikimate kinase. 886–893 (GMRAAGKS) serves as a coordination point for ATP. The segment at 1072–1284 (LTFQNLLPEM…AAPGQLTLRQ (213 aa)) is 3-dehydroquinase. Histidine 1189 functions as the Proton acceptor; for 3-dehydroquinate dehydratase activity in the catalytic mechanism. Lysine 1218 serves as the catalytic Schiff-base intermediate with substrate; for 3-dehydroquinate dehydratase activity. The segment at 1297 to 1577 (PKKMFVVGSP…APVYDAVTQE (281 aa)) is shikimate dehydrogenase.

The protein in the N-terminal section; belongs to the sugar phosphate cyclases superfamily. Dehydroquinate synthase family. This sequence in the 2nd section; belongs to the EPSP synthase family. In the 3rd section; belongs to the shikimate kinase family. It in the 4th section; belongs to the type-I 3-dehydroquinase family. The protein in the C-terminal section; belongs to the shikimate dehydrogenase family. As to quaternary structure, homodimer. Requires Zn(2+) as cofactor.

It localises to the cytoplasm. The catalysed reaction is 7-phospho-2-dehydro-3-deoxy-D-arabino-heptonate = 3-dehydroquinate + phosphate. The enzyme catalyses 3-dehydroquinate = 3-dehydroshikimate + H2O. It carries out the reaction shikimate + NADP(+) = 3-dehydroshikimate + NADPH + H(+). It catalyses the reaction shikimate + ATP = 3-phosphoshikimate + ADP + H(+). The catalysed reaction is 3-phosphoshikimate + phosphoenolpyruvate = 5-O-(1-carboxyvinyl)-3-phosphoshikimate + phosphate. The protein operates within metabolic intermediate biosynthesis; chorismate biosynthesis; chorismate from D-erythrose 4-phosphate and phosphoenolpyruvate: step 2/7. Its pathway is metabolic intermediate biosynthesis; chorismate biosynthesis; chorismate from D-erythrose 4-phosphate and phosphoenolpyruvate: step 3/7. It functions in the pathway metabolic intermediate biosynthesis; chorismate biosynthesis; chorismate from D-erythrose 4-phosphate and phosphoenolpyruvate: step 4/7. It participates in metabolic intermediate biosynthesis; chorismate biosynthesis; chorismate from D-erythrose 4-phosphate and phosphoenolpyruvate: step 5/7. The protein operates within metabolic intermediate biosynthesis; chorismate biosynthesis; chorismate from D-erythrose 4-phosphate and phosphoenolpyruvate: step 6/7. In terms of biological role, the AROM polypeptide catalyzes 5 consecutive enzymatic reactions in prechorismate polyaromatic amino acid biosynthesis. The protein is Pentafunctional AROM polypeptide of Eremothecium gossypii (strain ATCC 10895 / CBS 109.51 / FGSC 9923 / NRRL Y-1056) (Yeast).